The sequence spans 625 residues: Voltage-gated potassium channel KCNC4 (625 aa).

Disordered regions lie at residues 1-24 (MISS…SKTC) and 65-86 (LADP…SSGS). The interval 1 to 28 (MISSVCVSSYRGRKSGNKPPSKTCLKEE) is inactivation gate. Residues 1 to 227 (MISSVCVSSY…EDPYSSRAAR (227 aa)) are Cytoplasmic-facing. Phosphoserine occurs at positions 8, 9, 15, and 21. Residues 77–86 (DGGGAGSSGS) are compositionally biased toward gly residues. The Zn(2+) site is built by H117, C123, C144, and C145. A helical membrane pass occupies residues 228–248 (VVAFASLFFILVSITTFCLET). N257 and N266 each carry an N-linked (GlcNAc...) asparagine glycan. The helical transmembrane segment at 279-299 (EPILTYIEGVCVMWFTLEFLV) threads the bilayer. Residues 300-313 (RIVCCPDTLDFVKN) lie on the Cytoplasmic side of the membrane. A helical membrane pass occupies residues 314 to 334 (LLNIIDFVAILPFYLEVGLSG). Residues 346–365 (FLRVVRFVRILRIFKLTRHF) form a helical; Voltage-sensor membrane-spanning segment. Over 366–381 (VGLRVLGHTLRASTNE) the chain is Cytoplasmic. A helical transmembrane segment spans residues 382-402 (FLLLIIFLALGVLIFATMIYY). K(+) is bound by residues T437, L438, G439, and Y440. A Selectivity filter motif is present at residues 437–442 (TLGYGD). Residues 453–473 (VGALCALAGVLTIAMPVPVIV) traverse the membrane as a helical segment. At 474-625 (NNFGMYYSLA…CVPVSHTCAL (152 aa)) the chain is on the cytoplasmic side. The disordered stretch occupies residues 490–581 (PKKRKKHVPR…RRALRRSGTR (92 aa)). Residues 528–543 (AREEGMVERKRADSKQ) show a composition bias toward basic and acidic residues.

It belongs to the potassium channel family. C (Shaw) (TC 1.A.1.2) subfamily. Kv3.4/KCNC4 sub-subfamily. In terms of assembly, homotetramer. Heterotetramer of potassium channel proteins. Phosphorylation of serine residues in the inactivation gate inhibits rapid channel closure.

The protein resides in the membrane. The enzyme catalyses K(+)(in) = K(+)(out). Functionally, voltage-gated potassium channel that opens in response to the voltage difference across the membrane, forming a potassium-selective channel through which potassium ions pass in accordance with their electrochemical gradient. The channel displays rapid activation and inactivation kinetics. The polypeptide is Voltage-gated potassium channel KCNC4 (Rattus norvegicus (Rat)).